A 292-amino-acid polypeptide reads, in one-letter code: Ribosomal protein L11 methyltransferase (292 aa).

Positions 144, 165, 187, and 229 each coordinate S-adenosyl-L-methionine.

This sequence belongs to the methyltransferase superfamily. PrmA family.

The protein resides in the cytoplasm. It carries out the reaction L-lysyl-[protein] + 3 S-adenosyl-L-methionine = N(6),N(6),N(6)-trimethyl-L-lysyl-[protein] + 3 S-adenosyl-L-homocysteine + 3 H(+). Methylates ribosomal protein L11. The polypeptide is Ribosomal protein L11 methyltransferase (Pseudomonas syringae pv. tomato (strain ATCC BAA-871 / DC3000)).